The chain runs to 206 residues: Small ribosomal subunit protein uS4 (206 aa).

An S4 RNA-binding domain is found at 96 to 156; it reads CRLDNVVYRM…EKAKNQLRIA (61 aa).

The protein belongs to the universal ribosomal protein uS4 family. Part of the 30S ribosomal subunit. Contacts protein S5. The interaction surface between S4 and S5 is involved in control of translational fidelity.

Functionally, one of the primary rRNA binding proteins, it binds directly to 16S rRNA where it nucleates assembly of the body of the 30S subunit. In terms of biological role, with S5 and S12 plays an important role in translational accuracy. The sequence is that of Small ribosomal subunit protein uS4 from Azotobacter vinelandii (strain DJ / ATCC BAA-1303).